We begin with the raw amino-acid sequence, 110 residues long: tRNA-binding protein YgjH (110 aa).

The tRNA-binding domain occupies 8–110 (DFARLEMRVG…RMMPAGVRVV (103 aa)).

In terms of assembly, homodimer.

This chain is tRNA-binding protein YgjH (ygjH), found in Escherichia coli (strain K12).